Consider the following 243-residue polypeptide: Asnovolin H synthase nvfL (243 aa).

7 helical membrane-spanning segments follow: residues 20–42 (ANTLRIMCAISWNISYMSMAYYS), 51–71 (ALIPLCNNIAWEFVYSFIHCP), 75–95 (FVRIENTGWFLLNIVVMYAAI), 112–132 (LPFIFAVGISAMIAGHLALAA), 138–160 (IAFVWSAKGCQLVLSTGALSQLL), 169–189 (SYVVWLSRYLGTVFIDVMVTI), and 205–225 (LLLWFMAVFHLLDWTYGFCFY).

Belongs to the paxB family.

It is found in the membrane. It catalyses the reaction (3R)-[(10S)-11-epoxyfarnesyl]-2,3,5-trimethyl-6-oxido-4-oxocyclohexa-1,5-diene-1-carboxylate + H(+) = asnovolin H. The protein operates within secondary metabolite biosynthesis; terpenoid biosynthesis. Functionally, terpene cyclase; part of the gene cluster that mediates the biosynthesis of novofumigatonin, a heavily oxygenated meroterpenoid containing a unique orthoester moiety. The first step of the pathway is the synthesis of 3,5-dimethylorsellinic acid (DMOA) by the polyketide synthase nvfA via condensation of one acetyl-CoA starter unit with 3 malonyl-CoA units and 2 methylations. DMOA is then converted to farnesyl-DMOA by the farnesyltransferase nvfB. Epoxydation by FAD-dependent monooxygenase nvfK, followed by a protonation-initiated cyclization catalyzed by the terpene cyclase nvfL leads to the production of asnavolin H. The short chain dehydrogenase nvfC then as a 3-OH dehydrogenase of asnovolin H to yield chemesin D. There are two branches to synthesize asnovolin A from chemesin D. In one branch, chemesin D undergoes Baeyer-Villiger oxidation by nvfH, methylation by nvfJ, and enoyl reduction by the nvfM D enoylreductase that reduces the double bond between C-5'and C-6', to form respectively asnovolin I, asnovolin K, and asnovolin A. In the other branch, the methylation precedes the Baeyer-Villiger oxidation and the enoyl reduction to yield asnovolin A via the asnovolin J intermediate. Asnovolin A is further converted to fumigatonoid A by the Fe(II)/2-oxoglutarate-dependent dioxygenase nvfI that catalyzes an endoperoxidation reaction. The alpha/beta hydrolase nvfD then acts as an epimerase that converts fumigatonoid A to its C-5' epimer, which then undergoes spontaneous or nvfD-catalyzed lactonization. The following step utilizes the ketoreductase nvfG to produce fumigatonoid B. The dioxygenase nvfE further converts fumigatonoid B into fumigatonoid C. Finally the Fe(II)/2-oxoglutarate-dependent dioxygenase nvfF catalyzes two rounds of oxidation to transform fumigatonoid C into the end product, novofumigatonin A. The sequence is that of Asnovolin H synthase nvfL from Aspergillus novofumigatus (strain IBT 16806).